Here is a 300-residue protein sequence, read N- to C-terminus: Transcription termination/antitermination protein NusG (300 aa).

Residues 1–99 are disordered; sequence MSDPNVNDAI…EAEEPELDPI (99 aa). 2 stretches are compositionally biased toward acidic residues: residues 14–41 and 47–97; these read ESVE…EAAD and ETDE…PELD.

This sequence belongs to the NusG family.

Functionally, participates in transcription elongation, termination and antitermination. The chain is Transcription termination/antitermination protein NusG from Streptomyces coelicolor (strain ATCC BAA-471 / A3(2) / M145).